The primary structure comprises 131 residues: UPF0102 protein H16_A3579 (131 aa).

It belongs to the UPF0102 family.

In Cupriavidus necator (strain ATCC 17699 / DSM 428 / KCTC 22496 / NCIMB 10442 / H16 / Stanier 337) (Ralstonia eutropha), this protein is UPF0102 protein H16_A3579.